The following is a 715-amino-acid chain: Tensin-4 (715 aa).

Positions 1-18 (MSQVMSSPLLAGGHAVSL) are cleaved as a signal peptide. Position 82 is a phosphoserine (Ser-82). Disordered regions lie at residues 159-183 (RCHDGPQHCSSPSVTPPFGSLRSGG), 195-251 (RSSS…SPLV), 291-364 (SLLH…CPPS), and 376-435 (LING…ARDM). Residues 197 to 206 (SSESLIFSGN) are compositionally biased toward polar residues. Ser-248 carries the phosphoserine modification. Residues 291 to 325 (SLLHSSNSSHQSSSRSLESPANSSSSLHSLGSVSL) are compositionally biased toward low complexity. The region spanning 449-556 (WFKPNITREQ…ALPCKLTIPQ (108 aa)) is the SH2 domain. The PTB domain occupies 582 to 705 (CHTLYLSSVS…QPASQVIGLV (124 aa)).

Belongs to the PTEN phosphatase protein family. Interacts (via SH2 domain) with Rho GTPase-activating protein DLC1 (via C-terminus); the interaction is independent of DLC1 tyrosine phosphorylation. Interacts with integrin ITGB1; the interaction displaces tensin TNS3 from the ITGB1 cytoplasmic tail and promotes ITGB1 stability. Interacts (via SH2 domain) with E3 ubiquitin-protein ligase CBL (phosphorylated on 'Tyr-774'); the interaction is enhanced in the presence of EGF and reduces interaction of CBL with EGFR. Interacts (via SH2 domain) with receptor tyrosine kinase MET (when phosphorylated); the interaction increases MET protein stability. Post-translationally, proteolytically cleaved by caspase-3 during apoptosis. As to expression, expressed at low levels in colon (at protein level). Expressed in prostate and placenta.

Its subcellular location is the cell junction. The protein localises to the focal adhesion. It is found in the cytoplasm. It localises to the cytoskeleton. Functionally, promotes EGF-induced cell migration by displacing tensin TNS3 from the cytoplasmic tail of integrin ITGB1 which results in dissociation of TNS3 from focal adhesions, disassembly of actin stress fibers and initiation of cell migration. Suppresses ligand-induced degradation of EGFR by reducing EGFR ubiquitination in the presence of EGF. Increases MET protein stability by inhibiting MET endocytosis and subsequent lysosomal degradation which leads to increased cell survival, proliferation and migration. The polypeptide is Tensin-4 (TNS4) (Homo sapiens (Human)).